A 308-amino-acid chain; its full sequence is GMP synthase [glutamine-hydrolyzing] subunit B (308 aa).

Positions 1–185 (MNWEKFVEEK…LGLPEKIYNR (185 aa)) constitute a GMPS ATP-PPase domain. 28-34 (SGGVDSS) lines the ATP pocket.

As to quaternary structure, heterodimer composed of a glutamine amidotransferase subunit (A) and a GMP-binding subunit (B).

It catalyses the reaction XMP + L-glutamine + ATP + H2O = GMP + L-glutamate + AMP + diphosphate + 2 H(+). It functions in the pathway purine metabolism; GMP biosynthesis; GMP from XMP (L-Gln route): step 1/1. Its function is as follows. Catalyzes the synthesis of GMP from XMP. This is GMP synthase [glutamine-hydrolyzing] subunit B (guaAB) from Pyrococcus abyssi (strain GE5 / Orsay).